A 159-amino-acid chain; its full sequence is Phosphopantetheine adenylyltransferase (159 aa).

This sequence belongs to the eukaryotic CoaD family.

Its subcellular location is the cytoplasm. It carries out the reaction (R)-4'-phosphopantetheine + ATP + H(+) = 3'-dephospho-CoA + diphosphate. It functions in the pathway cofactor biosynthesis; coenzyme A biosynthesis. Its function is as follows. Reversibly transfers an adenylyl group from ATP to 4'-phosphopantetheine, yielding dephospho-CoA (dPCoA) and pyrophosphate. In Thermococcus gammatolerans (strain DSM 15229 / JCM 11827 / EJ3), this protein is Phosphopantetheine adenylyltransferase.